The sequence spans 401 residues: S-adenosylmethionine synthase (401 aa).

H16 provides a ligand contact to ATP. D18 contacts Mg(2+). E44 is a K(+) binding site. L-methionine-binding residues include E57 and Q100. The interval Q100 to E110 is flexible loop. ATP contacts are provided by residues D174 to K176, R241 to F242, D250, R256 to K257, A273, and K277. An L-methionine-binding site is contributed by D250. An L-methionine-binding site is contributed by K281.

The protein belongs to the AdoMet synthase family. In terms of assembly, homotetramer; dimer of dimers. It depends on Mg(2+) as a cofactor. The cofactor is K(+).

Its subcellular location is the cytoplasm. The catalysed reaction is L-methionine + ATP + H2O = S-adenosyl-L-methionine + phosphate + diphosphate. It functions in the pathway amino-acid biosynthesis; S-adenosyl-L-methionine biosynthesis; S-adenosyl-L-methionine from L-methionine: step 1/1. Its function is as follows. Catalyzes the formation of S-adenosylmethionine (AdoMet) from methionine and ATP. The overall synthetic reaction is composed of two sequential steps, AdoMet formation and the subsequent tripolyphosphate hydrolysis which occurs prior to release of AdoMet from the enzyme. The polypeptide is S-adenosylmethionine synthase (Streptococcus equi subsp. zooepidemicus (strain MGCS10565)).